The sequence spans 264 residues: Protein-L-isoaspartate O-methyltransferase (264 aa).

Positions 1 to 49 are disordered; it reads MRKPVGSKDGSGVYSRQGLDGYTPANSNTRISTATLPRPEPLRPAASSA. The span at 24–35 shows a compositional bias: polar residues; the sequence is PANSNTRISTAT. Residue Ser112 is part of the active site.

It belongs to the methyltransferase superfamily. L-isoaspartyl/D-aspartyl protein methyltransferase family.

The protein localises to the cytoplasm. It carries out the reaction [protein]-L-isoaspartate + S-adenosyl-L-methionine = [protein]-L-isoaspartate alpha-methyl ester + S-adenosyl-L-homocysteine. Catalyzes the methyl esterification of L-isoaspartyl residues in peptides and proteins that result from spontaneous decomposition of normal L-aspartyl and L-asparaginyl residues. It plays a role in the repair and/or degradation of damaged proteins. This is Protein-L-isoaspartate O-methyltransferase from Bordetella avium (strain 197N).